The sequence spans 406 residues: Probable 26S proteasome regulatory subunit 10B (406 aa).

191–198 (GPPGTGKT) contributes to the ATP binding site.

This sequence belongs to the AAA ATPase family.

Its subcellular location is the cytoplasm. It localises to the nucleus. Functionally, the 26S proteasome is involved in the ATP-dependent degradation of ubiquitinated proteins. The regulatory (or ATPase) complex confers ATP dependency and substrate specificity to the 26S complex. The polypeptide is Probable 26S proteasome regulatory subunit 10B (rpt-4) (Caenorhabditis elegans).